We begin with the raw amino-acid sequence, 130 residues long: Small ribosomal subunit protein uS9 (130 aa).

The disordered stretch occupies residues 109-130; the sequence is RKKERKKYGQRAARARYQYSKR.

The protein belongs to the universal ribosomal protein uS9 family.

The chain is Small ribosomal subunit protein uS9 from Nitratidesulfovibrio vulgaris (strain DSM 19637 / Miyazaki F) (Desulfovibrio vulgaris).